We begin with the raw amino-acid sequence, 663 residues long: Probable peptidyl-glycine alpha-amidating monooxygenase pamn-1 (663 aa).

The first 21 residues, 1–21 (MNDRISINLIYLVLTFCCVSA), serve as a signal peptide directing secretion. The peptidylglycine alpha-hydroxylating monooxygenase stretch occupies residues 1–300 (MNDRISINLI…YDAKLDNPYP (300 aa)). Residues His75 and His76 each coordinate Cu(2+). Cys82 and Cys98 are disulfide-bonded. Residue His142 coordinates Cu(2+). An N-linked (GlcNAc...) asparagine glycan is attached at Asn191. Intrachain disulfides connect Cys194/Cys305 and Cys261/Cys283. Cu(2+) contacts are provided by His210 and His212. N-linked (GlcNAc...) asparagine glycosylation occurs at Asn269. Cu(2+) is bound at residue Met282. A peptidyl-alpha-hydroxyglycine alpha-amidating lyase region spans residues 301–663 (QGAICAKDYP…WQFKIRHDQN (363 aa)). Arg376 serves as a coordination point for a protein. Residue Asn411 is glycosylated (N-linked (GlcNAc...) asparagine). NHL repeat units lie at residues 411-454 (NQTK…WKIE), 464-507 (SGEL…LDLN), 511-554 (IRQF…MTTQ), and 626-656 (FGQPHCLRVCPDGGHIFVGDIAEGKARLWQF). The cysteines at positions 478 and 497 are disulfide-linked. Residues Tyr496 and Arg543 each coordinate a protein.

The protein in the C-terminal section; belongs to the peptidyl-alpha-hydroxyglycine alpha-amidating lyase family. It in the N-terminal section; belongs to the copper type II ascorbate-dependent monooxygenase family. Monomer. Zn(2+) is required as a cofactor. The cofactor is Cu(2+).

It is found in the secreted. It carries out the reaction a [peptide]-C-terminal glycine + 2 L-ascorbate + O2 = a [peptide]-C-terminal (2S)-2-hydroxyglycine + 2 monodehydro-L-ascorbate radical + H2O. The catalysed reaction is a [peptide]-C-terminal (2S)-2-hydroxyglycine = a [peptide]-C-terminal amide + glyoxylate. Probable bifunctional enzyme that catalyzes 2 sequential steps in C-terminal alpha-amidation of peptides. The monooxygenase part produces an unstable peptidyl(2-hydroxyglycine) intermediate that is dismutated to glyoxylate and the corresponding desglycine peptide amide by the lyase part. C-terminal amidation of peptides such as neuropeptides is essential for full biological activity. The protein is Probable peptidyl-glycine alpha-amidating monooxygenase pamn-1 of Caenorhabditis elegans.